Here is a 313-residue protein sequence, read N- to C-terminus: Metal ABC transporter substrate-binding lipoprotein (313 aa).

The N-terminal stretch at 1-23 (MIEKYKNILITFIALAAIVFLVG) is a signal peptide. The N-palmitoyl cysteine moiety is linked to residue C24. C24 carries S-diacylglycerol cysteine lipidation. Residues H71, H143, E209, and D284 each contribute to the Zn(2+) site.

This sequence belongs to the bacterial solute-binding protein 9 family. Lipoprotein receptor antigen (Lrai) subfamily.

Its subcellular location is the cell membrane. Functionally, part of an ATP-driven transport system for a metal; probably for manganese. In Lactococcus lactis subsp. lactis (strain IL1403) (Streptococcus lactis), this protein is Metal ABC transporter substrate-binding lipoprotein (mtsA).